A 158-amino-acid polypeptide reads, in one-letter code: ATP synthase subunit delta (158 aa).

The protein belongs to the ATPase delta chain family. As to quaternary structure, F-type ATPases have 2 components, F(1) - the catalytic core - and F(0) - the membrane proton channel. F(1) has five subunits: alpha(3), beta(3), gamma(1), delta(1), epsilon(1). F(0) has three main subunits: a(1), b(2) and c(10-14). The alpha and beta chains form an alternating ring which encloses part of the gamma chain. F(1) is attached to F(0) by a central stalk formed by the gamma and epsilon chains, while a peripheral stalk is formed by the delta and b chains.

Its subcellular location is the cell membrane. F(1)F(0) ATP synthase produces ATP from ADP in the presence of a proton or sodium gradient. F-type ATPases consist of two structural domains, F(1) containing the extramembraneous catalytic core and F(0) containing the membrane proton channel, linked together by a central stalk and a peripheral stalk. During catalysis, ATP synthesis in the catalytic domain of F(1) is coupled via a rotary mechanism of the central stalk subunits to proton translocation. Functionally, this protein is part of the stalk that links CF(0) to CF(1). It either transmits conformational changes from CF(0) to CF(1) or is implicated in proton conduction. This chain is ATP synthase subunit delta, found in Roseiflexus castenholzii (strain DSM 13941 / HLO8).